A 439-amino-acid polypeptide reads, in one-letter code: Ribosomal protein uS12 methylthiotransferase RimO (439 aa).

The MTTase N-terminal domain occupies 2–114 (SKLYLMSLGC…IDEMILKKTN (113 aa)). Residues Cys11, Cys45, Cys77, Cys146, Cys150, and Cys153 each contribute to the [4Fe-4S] cluster site. The Radical SAM core domain maps to 132-363 (TGSNSHAFIK…VDEVIEKSFE (232 aa)).

This sequence belongs to the methylthiotransferase family. RimO subfamily. The cofactor is [4Fe-4S] cluster.

The protein resides in the cytoplasm. It catalyses the reaction L-aspartate(89)-[ribosomal protein uS12]-hydrogen + (sulfur carrier)-SH + AH2 + 2 S-adenosyl-L-methionine = 3-methylsulfanyl-L-aspartate(89)-[ribosomal protein uS12]-hydrogen + (sulfur carrier)-H + 5'-deoxyadenosine + L-methionine + A + S-adenosyl-L-homocysteine + 2 H(+). Catalyzes the methylthiolation of an aspartic acid residue of ribosomal protein uS12. The sequence is that of Ribosomal protein uS12 methylthiotransferase RimO from Campylobacter jejuni subsp. jejuni serotype O:2 (strain ATCC 700819 / NCTC 11168).